A 393-amino-acid chain; its full sequence is Pyrimidine monooxygenase RutA (393 aa).

FMN is bound by residues 79-80 (IK), N145, E154, 170-171 (RY), and S220.

It belongs to the NtaA/SnaA/DszA monooxygenase family. RutA subfamily.

It catalyses the reaction uracil + FMNH2 + NADH + O2 = (Z)-3-ureidoacrylate + FMN + NAD(+) + H2O + H(+). The catalysed reaction is thymine + FMNH2 + NADH + O2 = (Z)-2-methylureidoacrylate + FMN + NAD(+) + H2O + H(+). In terms of biological role, catalyzes the pyrimidine ring opening between N-3 and C-4 by an unusual flavin hydroperoxide-catalyzed mechanism, adding oxygen atoms in the process to yield ureidoacrylate peracid, that immediately reacts with FMN forming ureidoacrylate and FMN-N(5)-oxide. The FMN-N(5)-oxide reacts spontaneously with NADH to produce FMN. Requires the flavin reductase RutF to regenerate FMN in vivo. The sequence is that of Pyrimidine monooxygenase RutA from Escherichia coli O18:K1:H7 (strain IHE3034 / ExPEC).